Consider the following 222-residue polypeptide: N-(5'-phosphoribosyl)anthranilate isomerase (222 aa).

Belongs to the TrpF family.

It carries out the reaction N-(5-phospho-beta-D-ribosyl)anthranilate = 1-(2-carboxyphenylamino)-1-deoxy-D-ribulose 5-phosphate. It participates in amino-acid biosynthesis; L-tryptophan biosynthesis; L-tryptophan from chorismate: step 3/5. This Beijerinckia indica subsp. indica (strain ATCC 9039 / DSM 1715 / NCIMB 8712) protein is N-(5'-phosphoribosyl)anthranilate isomerase.